Reading from the N-terminus, the 347-residue chain is Malate dehydrogenase, mitochondrial (347 aa).

The N-terminal 27 residues, 1–27 (MKASILRSVRSAVSRSSSSNRLLSRSF), are a transit peptide targeting the mitochondrion. Residues 41 to 47 (GAAGGIG) and aspartate 67 each bind NAD(+). Substrate is bound by residues arginine 114 and arginine 120. NAD(+) contacts are provided by residues asparagine 127 and 150-152 (ISN). Positions 152 and 186 each coordinate substrate. Histidine 210 acts as the Proton acceptor in catalysis. Methionine 261 is an NAD(+) binding site.

The protein belongs to the LDH/MDH superfamily. MDH type 1 family. In terms of assembly, homodimer.

It is found in the mitochondrion matrix. The enzyme catalyses (S)-malate + NAD(+) = oxaloacetate + NADH + H(+). This chain is Malate dehydrogenase, mitochondrial (MMDH), found in Citrullus lanatus (Watermelon).